A 202-amino-acid polypeptide reads, in one-letter code: Small ribosomal subunit protein uS4 (202 aa).

A compositionally biased stretch (basic residues) spans 1-13 (MSRYRGPRLRVTR). The disordered stretch occupies residues 1–42 (MSRYRGPRLRVTRRLGELPGLTRKASKKSNPPGQHGQARRKR). The S4 RNA-binding domain occupies 90–152 (NRLDNVCFRL…KASKKLVEGN (63 aa)).

The protein belongs to the universal ribosomal protein uS4 family. In terms of assembly, part of the 30S ribosomal subunit. Contacts protein S5. The interaction surface between S4 and S5 is involved in control of translational fidelity.

One of the primary rRNA binding proteins, it binds directly to 16S rRNA where it nucleates assembly of the body of the 30S subunit. Its function is as follows. With S5 and S12 plays an important role in translational accuracy. In Prochlorococcus marinus subsp. pastoris (strain CCMP1986 / NIES-2087 / MED4), this protein is Small ribosomal subunit protein uS4.